The following is a 361-amino-acid chain: Chitinase-3-like protein 1 (361 aa).

The GH18 domain occupies tyrosine 1 to valine 361. Cysteine 5 and cysteine 30 are joined by a disulfide. An N-linked (GlcNAc...) asparagine glycan is attached at asparagine 39. Residues glutamate 49–tryptophan 50, glycine 76–asparagine 79, tyrosine 120, leucine 183–aspartate 186, and arginine 241 each bind chitin. The cysteines at positions 278 and 342 are disulfide-linked. Positions glutamine 302–alanine 316 are important for AKT1 activation and IL8 production. Tryptophan 330 lines the chitin pocket. N-linked (GlcNAc...) asparagine glycosylation is present at asparagine 345.

It belongs to the glycosyl hydrolase 18 family. In terms of assembly, monomer. In terms of tissue distribution, detected in mammary gland.

The protein resides in the secreted. The protein localises to the extracellular space. It localises to the cytoplasm. It is found in the perinuclear region. Its subcellular location is the endoplasmic reticulum. Functionally, carbohydrate-binding lectin with a preference for chitin. Has no chitinase activity. May play a role in tissue remodeling and in the capacity of cells to respond to and cope with changes in their environment. Plays a role in T-helper cell type 2 (Th2) inflammatory response and IL-13-induced inflammation, regulating allergen sensitization, inflammatory cell apoptosis, dendritic cell accumulation and M2 macrophage differentiation. Facilitates invasion of pathogenic enteric bacteria into colonic mucosa and lymphoid organs. Mediates activation of AKT1 signaling pathway and subsequent IL8 production in colonic epithelial cells. Regulates antibacterial responses in lung by contributing to macrophage bacterial killing, controlling bacterial dissemination and augmenting host tolerance. Also regulates hyperoxia-induced injury, inflammation and epithelial apoptosis in lung. This chain is Chitinase-3-like protein 1 (CHI3L1), found in Ovis aries (Sheep).